The sequence spans 335 residues: Glycerol-3-phosphate dehydrogenase [NAD(P)+] (335 aa).

Residues phenylalanine 11, arginine 31, and lysine 107 each coordinate NADPH. Lysine 107 and glycine 135 together coordinate sn-glycerol 3-phosphate. Residue alanine 139 participates in NADPH binding. Sn-glycerol 3-phosphate is bound by residues lysine 190, aspartate 245, serine 255, arginine 256, and asparagine 257. The Proton acceptor role is filled by lysine 190. Arginine 256 contributes to the NADPH binding site. NADPH contacts are provided by leucine 280 and glutamate 282.

This sequence belongs to the NAD-dependent glycerol-3-phosphate dehydrogenase family.

Its subcellular location is the cytoplasm. It carries out the reaction sn-glycerol 3-phosphate + NAD(+) = dihydroxyacetone phosphate + NADH + H(+). The enzyme catalyses sn-glycerol 3-phosphate + NADP(+) = dihydroxyacetone phosphate + NADPH + H(+). Its pathway is membrane lipid metabolism; glycerophospholipid metabolism. In terms of biological role, catalyzes the reduction of the glycolytic intermediate dihydroxyacetone phosphate (DHAP) to sn-glycerol 3-phosphate (G3P), the key precursor for phospholipid synthesis. The sequence is that of Glycerol-3-phosphate dehydrogenase [NAD(P)+] from Anaplasma marginale (strain St. Maries).